Consider the following 770-residue polypeptide: Probable copper-exporting P-type ATPase V (770 aa).

In terms of domain architecture, HMA spans methionine 1 to alanine 66. Residues aspartate 103–asparagine 130 form a disordered region. The span at arginine 110–glycine 121 shows a compositional bias: low complexity. 6 helical membrane-spanning segments follow: residues valine 141–tyrosine 161, alanine 164–leucine 184, alanine 193–serine 213, leucine 217–leucine 237, alanine 377–isoleucine 397, and valine 402–leucine 422. Aspartate 460 acts as the 4-aspartylphosphate intermediate in catalysis. Mg(2+)-binding residues include aspartate 660 and aspartate 664. Helical transmembrane passes span leucine 718–leucine 737 and valine 741–leucine 760.

This sequence belongs to the cation transport ATPase (P-type) (TC 3.A.3) family. Type IB subfamily.

It localises to the cell membrane. It carries out the reaction Cu(+)(in) + ATP + H2O = Cu(+)(out) + ADP + phosphate + H(+). Its function is as follows. Necessary for copper homeostasis and likely functions as a copper exporter. Also required for full virulence. In Mycobacterium tuberculosis (strain CDC 1551 / Oshkosh), this protein is Probable copper-exporting P-type ATPase V (ctpV).